Consider the following 309-residue polypeptide: Probable manganese-dependent inorganic pyrophosphatase (309 aa).

Positions 9, 13, 15, 75, 97, and 149 each coordinate Mn(2+).

Belongs to the PPase class C family. It depends on Mn(2+) as a cofactor.

It is found in the cytoplasm. The catalysed reaction is diphosphate + H2O = 2 phosphate + H(+). The polypeptide is Probable manganese-dependent inorganic pyrophosphatase (Bacillus anthracis (strain CDC 684 / NRRL 3495)).